The sequence spans 1420 residues: DNA-directed RNA polymerase subunit beta' (1420 aa).

The Zn(2+) site is built by cysteine 72, cysteine 74, cysteine 87, and cysteine 90. 3 residues coordinate Mg(2+): aspartate 462, aspartate 464, and aspartate 466. Zn(2+) contacts are provided by cysteine 816, cysteine 896, cysteine 903, and cysteine 906.

Belongs to the RNA polymerase beta' chain family. The RNAP catalytic core consists of 2 alpha, 1 beta, 1 beta' and 1 omega subunit. When a sigma factor is associated with the core the holoenzyme is formed, which can initiate transcription. The cofactor is Mg(2+). It depends on Zn(2+) as a cofactor.

It carries out the reaction RNA(n) + a ribonucleoside 5'-triphosphate = RNA(n+1) + diphosphate. Functionally, DNA-dependent RNA polymerase catalyzes the transcription of DNA into RNA using the four ribonucleoside triphosphates as substrates. This is DNA-directed RNA polymerase subunit beta' from Blochmanniella floridana.